Reading from the N-terminus, the 99-residue chain is Cytochrome c oxidase subunit 4 isoform 1, mitochondrial (99 aa).

The Mitochondrial matrix portion of the chain corresponds to 1–73 (SVVKSEDFTL…SFAEMNRRSN (73 aa)). Lys-4 is subject to N6-acetyllysine; alternate. Position 4 is an N6-succinyllysine; alternate (Lys-4). Lys-28 is modified (N6-acetyllysine). Phosphoserine occurs at positions 31 and 33. Lys-35 is subject to N6-acetyllysine; alternate. Lys-35 is modified (N6-succinyllysine; alternate). Residue Lys-42 is modified to N6-acetyllysine. Residues 74–99 (EWKTVVGTAMFFIGITALVIMWEKLY) form a helical membrane-spanning segment.

It belongs to the cytochrome c oxidase IV family. Component of the cytochrome c oxidase (complex IV, CIV), a multisubunit enzyme composed of 14 subunits. The complex is composed of a catalytic core of 3 subunits MT-CO1, MT-CO2 and MT-CO3, encoded in the mitochondrial DNA, and 11 supernumerary subunits COX4I, COX5A, COX5B, COX6A, COX6B, COX6C, COX7A, COX7B, COX7C, COX8 and NDUFA4, which are encoded in the nuclear genome. The complex exists as a monomer or a dimer and forms supercomplexes (SCs) in the inner mitochondrial membrane with NADH-ubiquinone oxidoreductase (complex I, CI) and ubiquinol-cytochrome c oxidoreductase (cytochrome b-c1 complex, complex III, CIII), resulting in different assemblies (supercomplex SCI(1)III(2)IV(1) and megacomplex MCI(2)III(2)IV(2)). Interacts with PHB2; the interaction decreases in absence of SPHK2. Interacts with AFG1L. Interacts with ABCB7; this interaction allows the regulation of cellular iron homeostasis and cellular reactive oxygen species (ROS) levels in cardiomyocytes. Interacts with FLVCR2; this interaction occurs in the absence of heme and is disrupted upon heme binding. Interacts with IRGC.

It localises to the mitochondrion inner membrane. Its pathway is energy metabolism; oxidative phosphorylation. Its function is as follows. Component of the cytochrome c oxidase, the last enzyme in the mitochondrial electron transport chain which drives oxidative phosphorylation. The respiratory chain contains 3 multisubunit complexes succinate dehydrogenase (complex II, CII), ubiquinol-cytochrome c oxidoreductase (cytochrome b-c1 complex, complex III, CIII) and cytochrome c oxidase (complex IV, CIV), that cooperate to transfer electrons derived from NADH and succinate to molecular oxygen, creating an electrochemical gradient over the inner membrane that drives transmembrane transport and the ATP synthase. Cytochrome c oxidase is the component of the respiratory chain that catalyzes the reduction of oxygen to water. Electrons originating from reduced cytochrome c in the intermembrane space (IMS) are transferred via the dinuclear copper A center (CU(A)) of subunit 2 and heme A of subunit 1 to the active site in subunit 1, a binuclear center (BNC) formed by heme A3 and copper B (CU(B)). The BNC reduces molecular oxygen to 2 water molecules using 4 electrons from cytochrome c in the IMS and 4 protons from the mitochondrial matrix. The polypeptide is Cytochrome c oxidase subunit 4 isoform 1, mitochondrial (COX4I1) (Mandrillus sphinx (Mandrill)).